We begin with the raw amino-acid sequence, 432 residues long: Aspartate aminotransferase (432 aa).

A substrate-binding site is contributed by 45–46 (RG). Residue 109–111 (SSL) coordinates pyridoxal 5'-phosphate. 148–150 (YDR) is a binding site for substrate. Pyridoxal 5'-phosphate is bound by residues N197, Y229, and 262-265 (STSK). R400 provides a ligand contact to substrate.

It belongs to the class-I pyridoxal-phosphate-dependent aminotransferase family. Homodimer. It depends on pyridoxal 5'-phosphate as a cofactor.

The catalysed reaction is L-aspartate + 2-oxoglutarate = oxaloacetate + L-glutamate. This Corynebacterium glutamicum (strain ATCC 13032 / DSM 20300 / JCM 1318 / BCRC 11384 / CCUG 27702 / LMG 3730 / NBRC 12168 / NCIMB 10025 / NRRL B-2784 / 534) protein is Aspartate aminotransferase.